A 448-amino-acid chain; its full sequence is Asparagine--tRNA ligase (448 aa).

The protein belongs to the class-II aminoacyl-tRNA synthetase family. As to quaternary structure, homodimer.

It is found in the cytoplasm. It catalyses the reaction tRNA(Asn) + L-asparagine + ATP = L-asparaginyl-tRNA(Asn) + AMP + diphosphate + H(+). This is Asparagine--tRNA ligase from Streptococcus thermophilus (strain CNRZ 1066).